Here is a 466-residue protein sequence, read N- to C-terminus: Zinc finger protein NUTCRACKER (466 aa).

Residues 1 to 23 (MTSEVLQTISSGSGFAQPQSSST) are compositionally biased toward polar residues. A disordered region spans residues 1–29 (MTSEVLQTISSGSGFAQPQSSSTLDHDES). At S56 the chain carries Phosphoserine. The segment at 66–88 (FLCEVCGKGFQRDQNLQLHRRGH) adopts a C2H2-type 1 zinc-finger fold. T98 carries the phosphothreonine; by KIN10 modification. Residues 107-137 (YVCPEKTCVHHHSSRALGDLTGIKKHFCRKH) form a C2H2-type 2 zinc finger. Positions 134-141 (CRKHGEKK) match the Nuclear localization signal motif. The C2H2-type 2; degenerate zinc finger occupies 142–165 (WTCEKCAKRYAVQSDWKAHSKTCG). Residues C144, C147, H160, C164, C171, and C173 each coordinate Zn(2+). The CCHC-type 2; atypical zinc-finger motif lies at 169-192 (YRCDCGTIFSRRDSFITHRAFCDA). 2 positions are modified to phosphoserine; by KIN10: S178 and S182. Residues 179–191 (RRDSFITHRAFCD) are SHR-binding. Positions 186 and 190 each coordinate Zn(2+).

Interacts with AKIN10. Post-translationally, inhibition of transcription factor activity by KIN10-mediated phosphorylation at Thr-98, Ser-178 and Ser-182 under sugar deprivation conditions, thus delaying flowering. In terms of tissue distribution, highly expressed in vegetative organs and at lower levels in flowers and siliques. Expressed predominantly in roots. In roots, present in cortex, endodermis, and pericycle layer.

The protein localises to the nucleus. Functionally, transcription activator that binds to the DNA sequence 5'-CTTTTGTCC-3'. Regulates photoperiodic flowering by modulating sugar transport and metabolism. Regulates SUS1 and SUS4. Transcription factor that regulates tissue boundaries and asymmetric cell division. Contributes to the sequestration of 'SHORT-ROOT' to the nucleus. This Arabidopsis thaliana (Mouse-ear cress) protein is Zinc finger protein NUTCRACKER.